The sequence spans 498 residues: Glycylpeptide N-tetradecanoyltransferase 2 (498 aa).

Positions 1 to 87 are disordered; sequence MAEDSESAAS…QPPSKNSTIP (87 aa). Residues 15–32 show a composition bias toward acidic residues; it reads ELDDQDTCGIDGDNEEET. Residue serine 38 is modified to Phosphoserine. Residues 46-57 are compositionally biased toward basic residues; that stretch reads KKKKKKQKRKKE. Positions 61-72 are enriched in polar residues; the sequence is SGGTKSDSASDS. The tetradecanoyl-CoA site is built by histidine 117, tryptophan 122, leucine 250, valine 252, serine 258, arginine 260, valine 261, and alanine 262.

It belongs to the NMT family.

Its subcellular location is the cytoplasm. It localises to the membrane. The enzyme catalyses N-terminal glycyl-[protein] + tetradecanoyl-CoA = N-tetradecanoylglycyl-[protein] + CoA + H(+). It catalyses the reaction N-terminal glycyl-L-lysyl-[protein] + tetradecanoyl-CoA = N-terminal glycyl-(N(6)-tetradecanoyl)-L-lysyl-[protein] + CoA + H(+). Its function is as follows. Adds a myristoyl group to the N-terminal glycine residue of certain cellular and viral proteins. Also able to mediate N-terminal lysine myristoylation of proteins: catalyzes myristoylation of ARF6 on both 'Gly-2' and 'Lys-3'. Lysine myristoylation is required to maintain ARF6 on membranes during the GTPase cycle. The polypeptide is Glycylpeptide N-tetradecanoyltransferase 2 (NMT2) (Bos taurus (Bovine)).